A 322-amino-acid chain; its full sequence is Protein-L-isoaspartate O-methyltransferase (322 aa).

Residues 1–101 (MSGERAKRFP…AKQGDRSAAP (101 aa)) are disordered. The span at 14–29 (EDLKREPRKPEGRVAE) shows a compositional bias: basic and acidic residues. Low complexity-rich tracts occupy residues 33–51 (AGDAARQRLTAAAAVPAAA) and 76–91 (HAPAAPGAAKRAPQGG). Serine 170 is an active-site residue.

This sequence belongs to the methyltransferase superfamily. L-isoaspartyl/D-aspartyl protein methyltransferase family.

It localises to the cytoplasm. The enzyme catalyses [protein]-L-isoaspartate + S-adenosyl-L-methionine = [protein]-L-isoaspartate alpha-methyl ester + S-adenosyl-L-homocysteine. Catalyzes the methyl esterification of L-isoaspartyl residues in peptides and proteins that result from spontaneous decomposition of normal L-aspartyl and L-asparaginyl residues. It plays a role in the repair and/or degradation of damaged proteins. The sequence is that of Protein-L-isoaspartate O-methyltransferase from Burkholderia pseudomallei (strain 1106a).